The primary structure comprises 1040 residues: MQVLPPSSTGGPSRLFIMRPVATTLLMVAILLAGIIGYRALPVSALPEVDYPTIQVVTLYPGASPDVMTSAVTAPLERQFGQMSGLKQMSSQSSGGASVITLQFQLTLPLDVAEQEVQAAINAATNLLPSDLPNPPVYSKVNPADPPIMTLAVTSTAMPMTQVEDMVETRVAQKISQISGVGLVTLSGGQRPAVRVKLNAQAIAALGLTSETVRTAITGANVNSAKGSLDGPSRAVTLSANDQMQSAEEYRQLIIAYQNGAPIRLGDVATVEQGAENSWLGAWANKEQAIVMNVQRQPGANIISTADSIRQMLPQLTESLPKSVKVTVLSDRTTNIRASVDDTQFELMMAIALVVMIIYLFLRNIPATIIPGVAVPLSLIGTFAVMVFLDFSINNLTLMALTIATGFVVDDAIVVIENISRYIEKGEKPLAAALKGAGEIGFTIISLTFSLIAVLIPLLFMGDIVGRLFREFAITLAVAILISAVVSLTLTPMMCARMLSQESLRKQNRFSRASEKMFDRIIAAYGRGLAKVLNHPWLTLSVALSTLLLSVLLWVFIPKGFFPVQDNGIIQGTLQAPQSSSFANMAQRQRQVADVILQDPAVQSLTSFVGVDGTNPSLNSARLQINLKPLDERDDRVQKVIARLQTAVDKVPGVDLFLQPTQDLTIDTQVSRTQYQFTLQATSLDALSTWVPQLMEKLQQLPQLSDVSSDWQDKGLVAYVNVDRDSASRLGISMADVDNALYNAFGQRLISTIYTQANQYRVVLEHNTEITPGLAALDTIRLTSSDGGVVPLSSIAKVEQRFAPLSINHLDQFPVTTISFNVPDNYSLGDAVQAIMDTEKTLNLPVDITTQFQGSTLAFQSALGSTVWLIVAAVVAMYIVLGILYESFIHPITILSTLPTAGVGALLALMIAGSELDVIAIIGIILLIGIVKKNAIMMIDFALAAEREQGMSPRDAIYQACLLRFRPILMTTLAALLGALPLMLSTGVGAELRRPLGIGMVGGLIVSQVLTLFTTPVIYLLFDRLALWTKSRFARHEEEA.

The next 12 membrane-spanning stretches (helical) occupy residues 16-36 (FIMRPVATTLLMVAILLAGII), 347-367 (LMMAIALVVMIIYLFLRNIPA), 369-389 (IIPGVAVPLSLIGTFAVMVFL), 396-416 (LTLMALTIATGFVVDDAIVVI), 440-460 (IGFTIISLTFSLIAVLIPLLF), 472-492 (FAITLAVAILISAVVSLTLTP), 537-557 (WLTLSVALSTLLLSVLLWVFI), 863-883 (LGSTVWLIVAAVVAMYIVLGI), 888-908 (FIHPITILSTLPTAGVGALLA), 911-931 (IAGSELDVIAIIGIILLIGIV), 968-988 (ILMTTLAALLGALPLMLSTGV), and 998-1018 (IGMVGGLIVSQVLTLFTTPVI).

Belongs to the resistance-nodulation-cell division (RND) (TC 2.A.6) family. MdtB subfamily. As to quaternary structure, part of a tripartite efflux system composed of MdtA, MdtB and MdtC. MdtB forms a heteromultimer with MdtC.

It localises to the cell inner membrane. In terms of biological role, the MdtABC tripartite complex confers resistance against novobiocin and deoxycholate. In Escherichia coli (strain SE11), this protein is Multidrug resistance protein MdtB.